The sequence spans 565 residues: METITKKARSLYIPYAGPVLLEFPLLNKGSAFSVEERRNFNLSGLLPEVVESIEEQAERAWLQYQGFKTEIDKHIYLRNIQDTNETLFYRLVQNHLEEMMPVIYTPTVGAACERFSEIYRRARGVFISYPNRHNMDDILQNVPNHNIKVIVVTDGERILGLGDQGIGGMGIPIGKLSLYTACGGISPAYTLPVVLDVGTNNQQLLNDPLYMGWRHPRITDDEYYAFVDEFIQAVKQRWPDILLQFEDFAQKNAMPLLTRYRDEICSFNDDIQGTAAVTVGTLIAASRAAGSQLSEQKIVFLGAGSAGCGIAEQIIAQTQREGLSEDAARQNVFMVDRFGLLTDRMPNLLPFQAKLVQKCDNLQHWDTENDVLSLLDVVRNVKPDILIGVSGQTGLFTEEIIREMHKHCPRPIVMPLSNPTSRVEATPQDIIAWTEGNALVATGSPFSPVIWKDKIYPIAQCNNAYIFPGIGLGVIASGASRITDEMLMSASETLAKHSPLVNNGEGLVLPALKDIQVVSRAIAFAVGKMAQQQGVAVKTSAEALQQAIDDNFWKPEYRDYRRTSI.

Tyr-104 (proton donor) is an active-site residue. Arg-157 contributes to the NAD(+) binding site. The active-site Proton acceptor is Lys-175. Positions 246, 247, and 270 each coordinate a divalent metal cation. Positions 270 and 418 each coordinate NAD(+).

Belongs to the malic enzymes family. In terms of assembly, homotetramer. Mg(2+) serves as cofactor. The cofactor is Mn(2+).

The catalysed reaction is (S)-malate + NAD(+) = pyruvate + CO2 + NADH. It catalyses the reaction oxaloacetate + H(+) = pyruvate + CO2. This Salmonella dublin (strain CT_02021853) protein is NAD-dependent malic enzyme.